The chain runs to 1578 residues: Pentafunctional AROM polypeptide (1578 aa).

The interval 1–393 is 3-dehydroquinate synthase; that stretch reads MSVELAKVSI…YGTSAHVVSD (393 aa). NAD(+) contacts are provided by residues 44-46, 79-82, 110-112, and aspartate 115; these read DTN, EAHK, and GGV. Position 126 (arginine 126) interacts with 7-phospho-2-dehydro-3-deoxy-D-arabino-heptonate. 135 to 136 is an NAD(+) binding site; the sequence is TS. Residues aspartate 142 and lysine 148 each contribute to the 7-phospho-2-dehydro-3-deoxy-D-arabino-heptonate site. Lysine 157 provides a ligand contact to NAD(+). Asparagine 158 provides a ligand contact to 7-phospho-2-dehydro-3-deoxy-D-arabino-heptonate. NAD(+)-binding positions include 175 to 178 and asparagine 186; that span reads WLET. Glutamate 190 lines the Zn(2+) pocket. 7-phospho-2-dehydro-3-deoxy-D-arabino-heptonate contacts are provided by residues 190–193 and lysine 259; that span reads EVIK. Glutamate 269 (proton acceptor; for 3-dehydroquinate synthase activity) is an active-site residue. 7-phospho-2-dehydro-3-deoxy-D-arabino-heptonate-binding positions include 273–277 and histidine 280; that span reads RNLLN. Residue histidine 280 participates in Zn(2+) binding. Catalysis depends on histidine 284, which acts as the Proton acceptor; for 3-dehydroquinate synthase activity. Residues histidine 296 and lysine 365 each contribute to the 7-phospho-2-dehydro-3-deoxy-D-arabino-heptonate site. Histidine 296 serves as a coordination point for Zn(2+). The segment at 406 to 863 is EPSP synthase; the sequence is VHPFNNIPEG…WDVLHSQLGA (458 aa). Cysteine 845 functions as the For EPSP synthase activity in the catalytic mechanism. Positions 882–1071 are shikimate kinase; it reads VVIIGMRAAG…VPSRRSAFVC (190 aa). 886-893 serves as a coordination point for ATP; it reads GMRAAGKS. Positions 1072–1284 are 3-dehydroquinase; it reads LTFEDLSDHL…AAPGQLTLAE (213 aa). The active-site Proton acceptor; for 3-dehydroquinate dehydratase activity is the histidine 1189. Residue lysine 1218 is the Schiff-base intermediate with substrate; for 3-dehydroquinate dehydratase activity of the active site. The interval 1297-1578 is shikimate dehydrogenase; sequence AKKFFVIGSP…KAIFDAVTQE (282 aa).

This sequence in the N-terminal section; belongs to the sugar phosphate cyclases superfamily. Dehydroquinate synthase family. It in the 2nd section; belongs to the EPSP synthase family. The protein in the 3rd section; belongs to the shikimate kinase family. In the 4th section; belongs to the type-I 3-dehydroquinase family. This sequence in the C-terminal section; belongs to the shikimate dehydrogenase family. In terms of assembly, homodimer. It depends on Zn(2+) as a cofactor.

It is found in the cytoplasm. The enzyme catalyses 7-phospho-2-dehydro-3-deoxy-D-arabino-heptonate = 3-dehydroquinate + phosphate. The catalysed reaction is 3-dehydroquinate = 3-dehydroshikimate + H2O. It catalyses the reaction shikimate + NADP(+) = 3-dehydroshikimate + NADPH + H(+). It carries out the reaction shikimate + ATP = 3-phosphoshikimate + ADP + H(+). The enzyme catalyses 3-phosphoshikimate + phosphoenolpyruvate = 5-O-(1-carboxyvinyl)-3-phosphoshikimate + phosphate. It functions in the pathway metabolic intermediate biosynthesis; chorismate biosynthesis; chorismate from D-erythrose 4-phosphate and phosphoenolpyruvate: step 2/7. It participates in metabolic intermediate biosynthesis; chorismate biosynthesis; chorismate from D-erythrose 4-phosphate and phosphoenolpyruvate: step 3/7. The protein operates within metabolic intermediate biosynthesis; chorismate biosynthesis; chorismate from D-erythrose 4-phosphate and phosphoenolpyruvate: step 4/7. Its pathway is metabolic intermediate biosynthesis; chorismate biosynthesis; chorismate from D-erythrose 4-phosphate and phosphoenolpyruvate: step 5/7. It functions in the pathway metabolic intermediate biosynthesis; chorismate biosynthesis; chorismate from D-erythrose 4-phosphate and phosphoenolpyruvate: step 6/7. Its function is as follows. The AROM polypeptide catalyzes 5 consecutive enzymatic reactions in prechorismate polyaromatic amino acid biosynthesis. This Kluyveromyces lactis (strain ATCC 8585 / CBS 2359 / DSM 70799 / NBRC 1267 / NRRL Y-1140 / WM37) (Yeast) protein is Pentafunctional AROM polypeptide.